Reading from the N-terminus, the 480-residue chain is Protein nucleotidyltransferase YdiU (480 aa).

Residues glycine 86, glycine 88, arginine 89, lysine 109, aspartate 121, glycine 122, arginine 172, and arginine 179 each contribute to the ATP site. The active-site Proton acceptor is aspartate 248. 2 residues coordinate Mg(2+): asparagine 249 and aspartate 258. Aspartate 258 contacts ATP.

This sequence belongs to the SELO family. Mg(2+) is required as a cofactor. Requires Mn(2+) as cofactor.

The enzyme catalyses L-seryl-[protein] + ATP = 3-O-(5'-adenylyl)-L-seryl-[protein] + diphosphate. It carries out the reaction L-threonyl-[protein] + ATP = 3-O-(5'-adenylyl)-L-threonyl-[protein] + diphosphate. The catalysed reaction is L-tyrosyl-[protein] + ATP = O-(5'-adenylyl)-L-tyrosyl-[protein] + diphosphate. It catalyses the reaction L-histidyl-[protein] + UTP = N(tele)-(5'-uridylyl)-L-histidyl-[protein] + diphosphate. The enzyme catalyses L-seryl-[protein] + UTP = O-(5'-uridylyl)-L-seryl-[protein] + diphosphate. It carries out the reaction L-tyrosyl-[protein] + UTP = O-(5'-uridylyl)-L-tyrosyl-[protein] + diphosphate. Functionally, nucleotidyltransferase involved in the post-translational modification of proteins. It can catalyze the addition of adenosine monophosphate (AMP) or uridine monophosphate (UMP) to a protein, resulting in modifications known as AMPylation and UMPylation. In Salmonella arizonae (strain ATCC BAA-731 / CDC346-86 / RSK2980), this protein is Protein nucleotidyltransferase YdiU.